A 108-amino-acid chain; its full sequence is UPF0060 membrane protein Mfla_0485 (108 aa).

The next 4 membrane-spanning stretches (helical) occupy residues 7–27 (FSLF…PYLW), 33–53 (SVWL…LLSL), 63–83 (AAYG…VDGI), and 87–107 (TWDF…MFAP).

Belongs to the UPF0060 family.

Its subcellular location is the cell inner membrane. In Methylobacillus flagellatus (strain ATCC 51484 / DSM 6875 / VKM B-1610 / KT), this protein is UPF0060 membrane protein Mfla_0485.